The primary structure comprises 611 residues: Zinc metalloproteinase-disintegrin-like ohanin (611 aa).

The N-terminal stretch at 1–20 (MIQVLLVTICLVVFPYQGSS) is a signal peptide. A propeptide spanning residues 21–187 (IILESGKVND…WESDEPIEKI (167 aa)) is cleaved from the precursor. Residues 198 to 393 (KYLELYIVAD…DTPQCLINKP (196 aa)) form the Peptidase M12B domain. N-linked (GlcNAc...) asparagine glycans are attached at residues Asn-217 and Asn-260. Disulfide bonds link Cys-307–Cys-388, Cys-347–Cys-372, and Cys-349–Cys-354. His-332 provides a ligand contact to Zn(2+). Residue Glu-333 is part of the active site. The Zn(2+) site is built by His-336 and His-342. Asn-395 carries N-linked (GlcNAc...) asparagine glycosylation. One can recognise a Disintegrin domain in the interval 401–487 (NAVCGNYVEE…ECPMDRFHKN (87 aa)). Intrachain disulfides connect Cys-404–Cys-433, Cys-415–Cys-428, Cys-417–Cys-423, Cys-427–Cys-450, Cys-441–Cys-447, Cys-446–Cys-472, Cys-459–Cys-479, Cys-466–Cys-498, Cys-491–Cys-503, Cys-510–Cys-560, Cys-525–Cys-578, Cys-538–Cys-548, Cys-555–Cys-603, and Cys-597–Cys-608. The D/ECD-tripeptide signature appears at 465–467 (ECD). Asn-528 carries N-linked (GlcNAc...) asparagine glycosylation.

The protein belongs to the venom metalloproteinase (M12B) family. P-III subfamily. P-IIIa sub-subfamily. Monomer. Zn(2+) is required as a cofactor. Expressed by the venom gland.

It localises to the secreted. With respect to regulation, inhibited by EDTA, but not by PMSF. In terms of biological role, snake venom zinc metalloproteinase that has hemorrhagic activity. Inhibits ADP-, TMVA- and stejnulxin-induced platelet aggregation in a dose-dependent manner (on washed platelet, but not on platelet rich plasm). Also specifically degrades alpha-chain of fibrinogen (FGA). The protein is Zinc metalloproteinase-disintegrin-like ohanin of Ophiophagus hannah (King cobra).